The primary structure comprises 124 residues: Small ribosomal subunit protein uS12 (124 aa).

The tract at residues 1–28 (MPTINQLVRKGRTPKVSKTKAPALKGSP) is disordered. Residues 9–18 (RKGRTPKVSK) are compositionally biased toward basic residues. Asp89 carries the post-translational modification 3-methylthioaspartic acid.

Belongs to the universal ribosomal protein uS12 family. In terms of assembly, part of the 30S ribosomal subunit. Contacts proteins S8 and S17. May interact with IF1 in the 30S initiation complex.

Functionally, with S4 and S5 plays an important role in translational accuracy. Interacts with and stabilizes bases of the 16S rRNA that are involved in tRNA selection in the A site and with the mRNA backbone. Located at the interface of the 30S and 50S subunits, it traverses the body of the 30S subunit contacting proteins on the other side and probably holding the rRNA structure together. The combined cluster of proteins S8, S12 and S17 appears to hold together the shoulder and platform of the 30S subunit. This chain is Small ribosomal subunit protein uS12, found in Paenarthrobacter aurescens (strain TC1).